A 222-amino-acid chain; its full sequence is UPF0758 protein Lcho_0695 (222 aa).

Residues 100-222 enclose the MPN domain; the sequence is VFDSPQAVRD…VVSFAERGLL (123 aa). His-171, His-173, and Asp-184 together coordinate Zn(2+). Positions 171 to 184 match the JAMM motif motif; sequence HNHPSGVAEPSRAD.

It belongs to the UPF0758 family.

The sequence is that of UPF0758 protein Lcho_0695 from Leptothrix cholodnii (strain ATCC 51168 / LMG 8142 / SP-6) (Leptothrix discophora (strain SP-6)).